The primary structure comprises 78 residues: uncharacterized protein (78 aa).

Residues 21–43 (SPFLFGAPLVGGLLGGFLGSALF) form a helical membrane-spanning segment.

The protein resides in the membrane. This is an uncharacterized protein from Bacillus subtilis (strain 168).